The primary structure comprises 883 residues: Alanine--tRNA ligase (883 aa).

Zn(2+) contacts are provided by His563, His567, Cys677, and His681.

Belongs to the class-II aminoacyl-tRNA synthetase family. Zn(2+) is required as a cofactor.

The protein resides in the cytoplasm. The catalysed reaction is tRNA(Ala) + L-alanine + ATP = L-alanyl-tRNA(Ala) + AMP + diphosphate. In terms of biological role, catalyzes the attachment of alanine to tRNA(Ala) in a two-step reaction: alanine is first activated by ATP to form Ala-AMP and then transferred to the acceptor end of tRNA(Ala). Also edits incorrectly charged Ser-tRNA(Ala) and Gly-tRNA(Ala) via its editing domain. In Cereibacter sphaeroides (strain ATCC 17023 / DSM 158 / JCM 6121 / CCUG 31486 / LMG 2827 / NBRC 12203 / NCIMB 8253 / ATH 2.4.1.) (Rhodobacter sphaeroides), this protein is Alanine--tRNA ligase.